The following is a 158-amino-acid chain: RNA pyrophosphohydrolase (158 aa).

One can recognise a Nudix hydrolase domain in the interval 6-149 (GYRLNVGIVL…KRHVYRKVMK (144 aa)). The Nudix box signature appears at 38 to 59 (GGINIGETPEQAMYRELFEEIG).

Belongs to the Nudix hydrolase family. RppH subfamily. Requires a divalent metal cation as cofactor.

Functionally, accelerates the degradation of transcripts by removing pyrophosphate from the 5'-end of triphosphorylated RNA, leading to a more labile monophosphorylated state that can stimulate subsequent ribonuclease cleavage. The chain is RNA pyrophosphohydrolase from Blochmanniella floridana.